We begin with the raw amino-acid sequence, 356 residues long: Aminodeoxyfutalosine deaminase (356 aa).

2 residues coordinate Zn(2+): His18 and His20. Residues Arg73, Glu140, and Gly172 each contribute to the substrate site. Position 199 (His199) interacts with Zn(2+). The active-site Proton donor is the Glu202. Asp287 contacts Zn(2+).

Belongs to the metallo-dependent hydrolases superfamily. Adenosine and AMP deaminases family. Requires Zn(2+) as cofactor.

The catalysed reaction is 6-amino-6-deoxyfutalosine + H2O + H(+) = futalosine + NH4(+). Its pathway is quinol/quinone metabolism; menaquinone biosynthesis. Its function is as follows. Catalyzes the deamination of aminodeoxyfutalosine (AFL) into futalosine (FL), a step in the biosynthesis of menaquinone (MK, vitamin K2). Is very poorly efficient on 1-(6-amino-9H-purin-9-yl)-1-deoxy-N-ethyl-beta-D-ribofuranuronamide (NECA), adenosine, 5'-methylthioadenosine, 5'-deoxyadenosine, 2'-deoxyadenosine, and AMP as substrate. The chain is Aminodeoxyfutalosine deaminase from Acidothermus cellulolyticus (strain ATCC 43068 / DSM 8971 / 11B).